A 466-amino-acid chain; its full sequence is MPKNNLLRTLPKVDESIAQLRSTGVAYSSDFVLKKSVQTCIARERQGILAGKITEKRAEDSWHACFLKELKERQAPNLRRMINGTGVVIHTNLGRSLLSSQVAERLAQTASYYSNLEFDLATGKRGSRYSLVEDTICELTGAEAALVVNNNAAAVFLALDALCRGTEVIVSRGQLVEIGGSFRIPDVMARSGADLVEVGATNRTHLYDYEDAISEQTSMLLRVHTSNFRIIGFTSEVPAEEMVGLARKKNLLTMEDLGSGSLIDLTSYGFPKEPTVQELVKAGVDVVTFSGDKLLGGPQAGIIVGSKSVVERIKKSPMNRAFRVDKFTLAALEVVLRSYYDSRQALQEIPTLRMLTTGKDVLLKRARRISRRLSAKLKEKCTLRIVPTMSRVGGGAFPEHDLASWAVAFRPEHIRLSEIEKRLRKLNTPIIGRLENEKFLLDVRTIQDDEVGLLCSLLLEFFLEAS.

The residue at position 293 (Lys-293) is an N6-(pyridoxal phosphate)lysine.

Belongs to the SelA family. The cofactor is pyridoxal 5'-phosphate.

It is found in the cytoplasm. It carries out the reaction L-seryl-tRNA(Sec) + selenophosphate + H(+) = L-selenocysteinyl-tRNA(Sec) + phosphate. The protein operates within aminoacyl-tRNA biosynthesis; selenocysteinyl-tRNA(Sec) biosynthesis; selenocysteinyl-tRNA(Sec) from L-seryl-tRNA(Sec) (bacterial route): step 1/1. Functionally, converts seryl-tRNA(Sec) to selenocysteinyl-tRNA(Sec) required for selenoprotein biosynthesis. This Desulfotalea psychrophila (strain LSv54 / DSM 12343) protein is L-seryl-tRNA(Sec) selenium transferase.